Here is a 338-residue protein sequence, read N- to C-terminus: MQFIDQAEIEVQAGKGGDGIVAFRREKYVPAGGPSGGNGGRGGSVILVAVEHLQTLLDFRYSRHFKAEDGKRGGPNNCTGANGSDRIIEVPRGTMIYDADTEEIIGDLVDNEQRLCIAQGGKGGLGNQHFLSNKNRAPEYALPGLEGEHRRIRLELKLLAEVGIIGLPNAGKSTLISALSSARPKIADYPFTTLIPNLGVVRKPTGDGTVFADIPGLIEGAHEGVGLGYDFLRHIERTRLLLHLVDLTAEDPIKDYQIIQQELEAYGRGLIDRPQIIGLNKLDAVDETVVTQIENDLSQITSDPIFKISAVARIGLDQMLQATWEQLDSNPSEVNISH.

The 159-residue stretch at 1 to 159 folds into the Obg domain; sequence MQFIDQAEIE…RRIRLELKLL (159 aa). The 169-residue stretch at 160–328 folds into the OBG-type G domain; it reads AEVGIIGLPN…MLQATWEQLD (169 aa). GTP-binding positions include 166-173, 191-195, 213-216, 280-283, and 309-311; these read GLPNAGKS, FTTLI, DIPG, NKLD, and SAV. Residues Ser-173 and Thr-193 each contribute to the Mg(2+) site.

Belongs to the TRAFAC class OBG-HflX-like GTPase superfamily. OBG GTPase family. As to quaternary structure, monomer. Mg(2+) serves as cofactor.

It is found in the cytoplasm. An essential GTPase which binds GTP, GDP and possibly (p)ppGpp with moderate affinity, with high nucleotide exchange rates and a fairly low GTP hydrolysis rate. Plays a role in control of the cell cycle, stress response, ribosome biogenesis and in those bacteria that undergo differentiation, in morphogenesis control. This Gloeothece citriformis (strain PCC 7424) (Cyanothece sp. (strain PCC 7424)) protein is GTPase Obg.